Here is a 359-residue protein sequence, read N- to C-terminus: 5-formaminoimidazole-4-carboxamide-1-(beta)-D-ribofuranosyl 5'-monophosphate synthetase (359 aa).

The 5-amino-1-(5-phospho-beta-D-ribosyl)imidazole-4-carboxamide site is built by His27 and Ser94. The ATP-grasp domain maps to 116-340; sequence RRLLRWESER…FGEIVTMGRR (225 aa). ATP-binding positions include 146-208 and Glu230; that span reads PEDI…TNFC. Asn258 lines the 5-amino-1-(5-phospho-beta-D-ribosyl)imidazole-4-carboxamide pocket. The Mg(2+) site is built by Gln297 and Glu310.

The protein belongs to the phosphohexose mutase family. Mg(2+) is required as a cofactor. Requires Mn(2+) as cofactor.

It carries out the reaction 5-amino-1-(5-phospho-beta-D-ribosyl)imidazole-4-carboxamide + formate + ATP = 5-formamido-1-(5-phospho-D-ribosyl)imidazole-4-carboxamide + ADP + phosphate. Its pathway is purine metabolism; IMP biosynthesis via de novo pathway; 5-formamido-1-(5-phospho-D-ribosyl)imidazole-4-carboxamide from 5-amino-1-(5-phospho-D-ribosyl)imidazole-4-carboxamide (formate route): step 1/1. Catalyzes the ATP- and formate-dependent formylation of 5-aminoimidazole-4-carboxamide-1-beta-d-ribofuranosyl 5'-monophosphate (AICAR) to 5-formaminoimidazole-4-carboxamide-1-beta-d-ribofuranosyl 5'-monophosphate (FAICAR) in the absence of folates. This is 5-formaminoimidazole-4-carboxamide-1-(beta)-D-ribofuranosyl 5'-monophosphate synthetase from Methanopyrus kandleri (strain AV19 / DSM 6324 / JCM 9639 / NBRC 100938).